The chain runs to 309 residues: Probable (S)-ureidoglycine aminohydrolase (309 aa).

The N-terminal stretch at 1 to 22 (MMLPRLLLLVVASALPLASVAA) is a signal peptide. Mn(2+) is bound by residues E245, H247, H251, and Q285. E245 is a substrate binding site. 3 residues coordinate substrate: Q285, Y297, and K301.

Belongs to the UGHY family. Homooctamer. Mn(2+) serves as cofactor.

Its subcellular location is the endoplasmic reticulum. It carries out the reaction (S)-2-ureidoglycine + H2O = (S)-ureidoglycolate + NH4(+). In terms of biological role, involved in the catabolism of purine nucleotides. The sequential activity of AAH, UGLYAH and UAH allows a complete purine breakdown without the intermediate generation of urea. In Oryza sativa subsp. japonica (Rice), this protein is Probable (S)-ureidoglycine aminohydrolase (UGLYAH).